Here is a 137-residue protein sequence, read N- to C-terminus: Protein E6 (137 aa).

Zinc fingers lie at residues 17–53 (CLWC…CTIC) and 90–127 (CCYC…CYDC).

This sequence belongs to the papillomaviridae E6 protein family. As to quaternary structure, forms homodimers. Interacts with ubiquitin-protein ligase UBE3A/E6-AP; this interaction stimulates UBE3A ubiquitin activity. Interacts with host BAK1. Interacts with human FBLN1.

Its subcellular location is the host cytoplasm. It is found in the host nucleus. Plays a major role in the induction and maintenance of cellular transformation. E6 associates with host UBE3A/E6-AP ubiquitin-protein ligase and modulates its activity. Protects host keratinocytes from apoptosis by mediating the degradation of host BAK1. May also inhibit host immune response. The polypeptide is Protein E6 (Bos taurus (Bovine)).